The chain runs to 382 residues: uncharacterized protein (382 aa).

Residues 1–7 (MSIYTRP) lie on the Cytoplasmic side of the membrane. A helical transmembrane segment spans residues 8 to 28 (VMLLLCGLLLLTLAIAVLNTL). Residues 29 to 44 (VPLWLAQANLPTWQVG) are Periplasmic-facing. A helical transmembrane segment spans residues 45–65 (MVSSSYFTGNLVGTLFTGYLI). At 66-74 (KRIGFNRSY) the chain is on the cytoplasmic side. Residues 75-95 (YLASLIFAAGCVGLGVMVGFW) form a helical membrane-spanning segment. Residues 96-101 (SWMSWR) are Periplasmic-facing. The chain crosses the membrane as a helical span at residues 102–122 (FIAGIGCAMIWVVVESALMCS). At 123-130 (GTSHNRGR) the chain is on the cytoplasmic side. Residues 131-151 (LLAAYMMVYYMGTFLGQLLVS) form a helical membrane-spanning segment. At 152–156 (KVSGE) the chain is on the periplasmic side. A helical transmembrane segment spans residues 157–177 (LLHVLPWVTGMILAGILPLLF). The Cytoplasmic segment spans residues 178–203 (TRIVNQQTQARHSSSISAMLKLRQAR). A helical transmembrane segment spans residues 204-224 (LGVNGCIISGIVLGSLYGLMP). Topologically, residues 225–230 (LYLKHQ) are periplasmic. The helical transmembrane segment at 231–251 (GMANASIGFWMAVLVSAGILG) threads the bilayer. At 252 to 269 (QWPMGRLADKFGRLLVLR) the chain is on the cytoplasmic side. 2 helical membrane passes run 270–290 (VQVF…AMAP) and 291–311 (ALFI…AWAC). At 312–324 (EKVEHHQLVAMNQ) the chain is on the cytoplasmic side. The helical transmembrane segment at 325-345 (ALLLSYTVGSLLGPSFAAMLM) threads the bilayer. Residues 346–348 (QNY) are Periplasmic-facing. Residues 349 to 369 (SDNLLFIMIASVSFIYLLMLL) form a helical membrane-spanning segment. The Cytoplasmic portion of the chain corresponds to 370-382 (RNVGQTPNPVAHI).

Belongs to the major facilitator superfamily. YcaD (TC 2.A.1.26) family.

The protein localises to the cell inner membrane. This is an uncharacterized protein from Salmonella typhi.